The following is a 980-amino-acid chain: Envelope glycoprotein B (980 aa).

Residues 1–14 show a composition bias toward polar residues; the sequence is MSSGCRSVGGSTWG. Disordered regions lie at residues 1–20 and 88–118; these read MSSG…RGDG and TTPS…TETP. The first 86 residues, 1 to 86, serve as a signal peptide directing secretion; sequence MSSGCRSVGG…LFGSCVVRAV (86 aa). At 87–849 the chain is on the virion surface side; sequence PTTPSPPTST…SGIASFLNNP (763 aa). Positions 96 to 118 are enriched in low complexity; sequence TPTSMSTHSHGTVDPTLLPTETP. Intrachain disulfides connect C140-C647, C157-C603, C231-C296, C389-C437, and C668-C708. N165 carries N-linked (GlcNAc...) asparagine; by host glycosylation. The interval 197–203 is involved in fusion and/or binding to host membrane; it reads VWKGYSH. N275 carries N-linked (GlcNAc...) asparagine; by host glycosylation. An involved in fusion and/or binding to host membrane region spans residues 282–290; that stretch reads GWMPWRHYT. N-linked (GlcNAc...) asparagine; by host glycosylation is found at N380, N423, N497, N514, N515, and N560. Low complexity predominate over residues 505-516; sequence LLNPNANNNNNT. A disordered region spans residues 505 to 535; sequence LLNPNANNNNNTTRRRRSLLSVPEPQPTQDG. N727 and N749 each carry an N-linked (GlcNAc...) asparagine; by host glycan. 2 hydrophobic membrane proximal region regions span residues 794 to 847 and 823 to 843; these read IDSV…SFLN and AVGT…SGIA. Residues 850–870 form a helical membrane-spanning segment; the sequence is FGGLAIGLLVIAGLVAAFFAY. Topologically, residues 871-980 are intravirion; the sequence is RYVMQIRSNP…NDTMENEKMV (110 aa). The Golgi targeting signature appears at 925–928; sequence YMSM. Positions 965–968 match the Internalization motif motif; sequence YTRL.

This sequence belongs to the herpesviridae glycoprotein B family. In terms of assembly, homotrimer; disulfide-linked. Binds to heparan sulfate proteoglycans. Interacts with gH/gL heterodimer. A proteolytic cleavage by host furin generates two subunits that remain linked by disulfide bonds.

The protein resides in the virion membrane. It localises to the host cell membrane. Its subcellular location is the host endosome membrane. It is found in the host Golgi apparatus membrane. In terms of biological role, envelope glycoprotein that forms spikes at the surface of virion envelope. Essential for the initial attachment to heparan sulfate moieties of the host cell surface proteoglycans. Involved in fusion of viral and cellular membranes leading to virus entry into the host cell. Following initial binding to its host receptors, membrane fusion is mediated by the fusion machinery composed at least of gB and the heterodimer gH/gL. May be involved in the fusion between the virion envelope and the outer nuclear membrane during virion egress. The polypeptide is Envelope glycoprotein B (Equine herpesvirus 1 (strain AB1) (EHV-1)).